We begin with the raw amino-acid sequence, 400 residues long: Enoyl-[acyl-carrier-protein] reductase [NADH] 2 (400 aa).

Residues 48–53 (GASSGF), 75–76 (FE), 112–113 (DA), and 141–142 (LA) each bind NAD(+). Tyr-228 contributes to the substrate binding site. The active-site Proton donor is Tyr-238. NAD(+) is bound by residues Lys-247 and 276 to 278 (LVT).

It belongs to the TER reductase family. Monomer.

It carries out the reaction a 2,3-saturated acyl-[ACP] + NAD(+) = a (2E)-enoyl-[ACP] + NADH + H(+). It participates in lipid metabolism; fatty acid biosynthesis. Involved in the final reduction of the elongation cycle of fatty acid synthesis (FAS II). Catalyzes the reduction of a carbon-carbon double bond in an enoyl moiety that is covalently linked to an acyl carrier protein (ACP). The chain is Enoyl-[acyl-carrier-protein] reductase [NADH] 2 from Vibrio vulnificus (strain CMCP6).